A 284-amino-acid polypeptide reads, in one-letter code: D-tagatose-1,6-bisphosphate aldolase subunit GatY (284 aa).

Catalysis depends on D82, which acts as the Proton donor. Residues H83 and H180 each contribute to the Zn(2+) site. Dihydroxyacetone phosphate is bound at residue G181. H208 provides a ligand contact to Zn(2+). Dihydroxyacetone phosphate-binding positions include 209 to 211 (GAS) and 230 to 233 (NVAT).

Belongs to the class II fructose-bisphosphate aldolase family. TagBP aldolase GatY subfamily. Forms a complex with GatZ. Requires Zn(2+) as cofactor.

It catalyses the reaction D-tagatofuranose 1,6-bisphosphate = D-glyceraldehyde 3-phosphate + dihydroxyacetone phosphate. It participates in carbohydrate metabolism; D-tagatose 6-phosphate degradation; D-glyceraldehyde 3-phosphate and glycerone phosphate from D-tagatose 6-phosphate: step 2/2. In terms of biological role, catalytic subunit of the tagatose-1,6-bisphosphate aldolase GatYZ, which catalyzes the reversible aldol condensation of dihydroxyacetone phosphate (DHAP or glycerone-phosphate) with glyceraldehyde 3-phosphate (G3P) to produce tagatose 1,6-bisphosphate (TBP). Requires GatZ subunit for full activity and stability. Is involved in the catabolism of galactitol. This chain is D-tagatose-1,6-bisphosphate aldolase subunit GatY, found in Shigella sonnei (strain Ss046).